A 589-amino-acid polypeptide reads, in one-letter code: Aspartate--tRNA(Asp/Asn) ligase (589 aa).

L-aspartate is bound at residue Glu-170. The tract at residues 194 to 197 (QLFK) is aspartate. L-aspartate is bound at residue Arg-216. Residues 216 to 218 (RDE) and Gln-225 each bind ATP. His-448 provides a ligand contact to L-aspartate. Residue Glu-482 participates in ATP binding. Arg-489 lines the L-aspartate pocket. ATP is bound at residue 534 to 537 (GWDR). Residues 563–589 (PLTDAPASITAQQRKESGIDTKPKEVE) are disordered. A compositionally biased stretch (basic and acidic residues) spans 575-589 (QRKESGIDTKPKEVE).

Belongs to the class-II aminoacyl-tRNA synthetase family. Type 1 subfamily. As to quaternary structure, homodimer.

Its subcellular location is the cytoplasm. The enzyme catalyses tRNA(Asx) + L-aspartate + ATP = L-aspartyl-tRNA(Asx) + AMP + diphosphate. Functionally, aspartyl-tRNA synthetase with relaxed tRNA specificity since it is able to aspartylate not only its cognate tRNA(Asp) but also tRNA(Asn). Reaction proceeds in two steps: L-aspartate is first activated by ATP to form Asp-AMP and then transferred to the acceptor end of tRNA(Asp/Asn). This is Aspartate--tRNA(Asp/Asn) ligase from Mycobacterium leprae (strain Br4923).